We begin with the raw amino-acid sequence, 451 residues long: Bifunctional protein GlmU (451 aa).

The segment at 1 to 225 is pyrophosphorylase; it reads MVVVAILAAG…YQEILGINDR (225 aa). UDP-N-acetyl-alpha-D-glucosamine-binding positions include 7 to 10, K21, Q72, and 77 to 78; these read LAAG and GT. Residue D102 participates in Mg(2+) binding. UDP-N-acetyl-alpha-D-glucosamine contacts are provided by G139, E154, N169, and N223. N223 is a Mg(2+) binding site. The segment at 226–246 is linker; the sequence is LQLATAYEILQRRVKEQWMMA. The N-acetyltransferase stretch occupies residues 247–451; sequence GVTLIDPNSI…PGWRKKSGES (205 aa). Residues R328 and K346 each coordinate UDP-N-acetyl-alpha-D-glucosamine. H358 serves as the catalytic Proton acceptor. Y361 and N372 together coordinate UDP-N-acetyl-alpha-D-glucosamine. Residues A375, 381 to 382, S400, A418, and R435 each bind acetyl-CoA; that span reads NY.

The protein in the N-terminal section; belongs to the N-acetylglucosamine-1-phosphate uridyltransferase family. In the C-terminal section; belongs to the transferase hexapeptide repeat family. In terms of assembly, homotrimer. Mg(2+) serves as cofactor.

The protein localises to the cytoplasm. The enzyme catalyses alpha-D-glucosamine 1-phosphate + acetyl-CoA = N-acetyl-alpha-D-glucosamine 1-phosphate + CoA + H(+). It catalyses the reaction N-acetyl-alpha-D-glucosamine 1-phosphate + UTP + H(+) = UDP-N-acetyl-alpha-D-glucosamine + diphosphate. The protein operates within nucleotide-sugar biosynthesis; UDP-N-acetyl-alpha-D-glucosamine biosynthesis; N-acetyl-alpha-D-glucosamine 1-phosphate from alpha-D-glucosamine 6-phosphate (route II): step 2/2. It participates in nucleotide-sugar biosynthesis; UDP-N-acetyl-alpha-D-glucosamine biosynthesis; UDP-N-acetyl-alpha-D-glucosamine from N-acetyl-alpha-D-glucosamine 1-phosphate: step 1/1. Its pathway is bacterial outer membrane biogenesis; LPS lipid A biosynthesis. In terms of biological role, catalyzes the last two sequential reactions in the de novo biosynthetic pathway for UDP-N-acetylglucosamine (UDP-GlcNAc). The C-terminal domain catalyzes the transfer of acetyl group from acetyl coenzyme A to glucosamine-1-phosphate (GlcN-1-P) to produce N-acetylglucosamine-1-phosphate (GlcNAc-1-P), which is converted into UDP-GlcNAc by the transfer of uridine 5-monophosphate (from uridine 5-triphosphate), a reaction catalyzed by the N-terminal domain. This Trichormus variabilis (strain ATCC 29413 / PCC 7937) (Anabaena variabilis) protein is Bifunctional protein GlmU.